Consider the following 325-residue polypeptide: Aldo-keto reductase family 1 member A1 (325 aa).

Thr2 is subject to N-acetylthreonine. The residue at position 4 (Ser4) is a Phosphoserine. NADP(+) contacts are provided by residues 11-20 (GQKMPLIGLG), Thr21, and Trp22. Lys23 carries N-linked (Glc) (glycation) lysine glycosylation. A Phosphoserine modification is found at Ser38. Asp45 serves as a coordination point for NADP(+). Residue Tyr50 is the Proton donor of the active site. 2 N-linked (Glc) (glycation) lysine glycosylation sites follow: Lys68 and Lys85. N6-acetyllysine; alternate is present on Lys127. Lys127 is subject to N6-succinyllysine; alternate. N-linked (Glc) (glycation) lysine glycosylation is present at Lys141. At Lys145 the chain carries N6-succinyllysine. Lys153 carries N-linked (Glc) (glycation) lysine glycosylation. Residues Ser162, Asn163, Ser211, Leu213, Ser215, Ser216, Lys263, Ser264, Ile265, Thr266, Arg269, Gln272, and Asn273 each contribute to the NADP(+) site. Ser211 is subject to Phosphoserine.

Belongs to the aldo/keto reductase family. As to quaternary structure, monomer. As to expression, widely expressed.

It is found in the cytoplasm. The protein resides in the cytosol. It localises to the apical cell membrane. The catalysed reaction is a primary alcohol + NADP(+) = an aldehyde + NADPH + H(+). It carries out the reaction L-gulonate + NADP(+) = aldehydo-D-glucuronate + NADPH + H(+). It catalyses the reaction L-gulono-1,4-lactone + NADP(+) = D-glucurono-3,6-lactone + NADPH + H(+). The enzyme catalyses allyl alcohol + NADP(+) = acrolein + NADPH + H(+). The catalysed reaction is glycerol + NADP(+) = D-glyceraldehyde + NADPH + H(+). It carries out the reaction glycerol + NADP(+) = L-glyceraldehyde + NADPH + H(+). It catalyses the reaction hydroxyacetone + NADP(+) = methylglyoxal + NADPH + H(+). The enzyme catalyses 3-deoxyfructose + NADP(+) = 3-deoxyglucosone + NADPH + H(+). The catalysed reaction is (R)-mevalonate + NADP(+) = (R)-mevaldate + NADPH + H(+). It carries out the reaction pyridine 3-methanol + NADP(+) = pyridine-3-carbaldehyde + NADPH + H(+). It catalyses the reaction S-nitroso-CoA + NADPH + H(+) = sulfinamide-CoA + NADP(+). The enzyme catalyses S-nitrosoglutathione + NADPH + H(+) = S-(hydroxysulfenamide)glutathione + NADP(+). Its function is as follows. Catalyzes the NADPH-dependent reduction of a wide variety of carbonyl-containing compounds to their corresponding alcohols. Displays enzymatic activity towards endogenous metabolites such as aromatic and aliphatic aldehydes, ketones, monosaccharides and bile acids. Plays an important role in ascorbic acid biosynthesis by catalyzing the reduction of D-glucuronic acid and D-glucurono-gamma-lactone. Functions as a detoxifiying enzyme by reducing a range of toxic aldehydes. Reduces methylglyoxal and 3-deoxyglucosone, which are present at elevated levels under hyperglycemic conditions and are cytotoxic. Involved also in the detoxification of lipid-derived aldehydes like acrolein. Plays a role in the activation of procarcinogens, such as polycyclic aromatic hydrocarbon trans-dihydrodiols, and in the metabolism of various xenobiotics and drugs. Also acts as an inhibitor of protein S-nitrosylation by mediating degradation of S-nitroso-coenzyme A (S-nitroso-CoA), a cofactor required to S-nitrosylate proteins. S-nitroso-CoA reductase activity is involved in reprogramming intermediary metabolism in renal proximal tubules, notably by inhibiting protein S-nitrosylation of isoform 2 of PKM (PKM2). Also acts as a S-nitroso-glutathione reductase by catalyzing the NADPH-dependent reduction of S-nitrosoglutathione. Displays no reductase activity towards retinoids. In Rattus norvegicus (Rat), this protein is Aldo-keto reductase family 1 member A1 (Akr1a1).